The chain runs to 376 residues: Dual-specificity RNA methyltransferase RlmN (376 aa).

The active-site Proton acceptor is Glu96. A Radical SAM core domain is found at Asp102–Asp341. Residues Cys109 and Cys346 are joined by a disulfide bond. The [4Fe-4S] cluster site is built by Cys116, Cys120, and Cys123. S-adenosyl-L-methionine-binding positions include Gly170–Glu171, Ser202, Ser224–His226, and Asn303. The active-site S-methylcysteine intermediate is Cys346.

This sequence belongs to the radical SAM superfamily. RlmN family. [4Fe-4S] cluster serves as cofactor.

It localises to the cytoplasm. It catalyses the reaction adenosine(2503) in 23S rRNA + 2 reduced [2Fe-2S]-[ferredoxin] + 2 S-adenosyl-L-methionine = 2-methyladenosine(2503) in 23S rRNA + 5'-deoxyadenosine + L-methionine + 2 oxidized [2Fe-2S]-[ferredoxin] + S-adenosyl-L-homocysteine. It carries out the reaction adenosine(37) in tRNA + 2 reduced [2Fe-2S]-[ferredoxin] + 2 S-adenosyl-L-methionine = 2-methyladenosine(37) in tRNA + 5'-deoxyadenosine + L-methionine + 2 oxidized [2Fe-2S]-[ferredoxin] + S-adenosyl-L-homocysteine. Its function is as follows. Specifically methylates position 2 of adenine 2503 in 23S rRNA and position 2 of adenine 37 in tRNAs. m2A2503 modification seems to play a crucial role in the proofreading step occurring at the peptidyl transferase center and thus would serve to optimize ribosomal fidelity. The polypeptide is Dual-specificity RNA methyltransferase RlmN (Pseudoalteromonas atlantica (strain T6c / ATCC BAA-1087)).